The chain runs to 238 residues: Citrate-binding protein (238 aa).

Positions 1-31 are cleaved as a signal peptide; sequence MKMKRSPYCFCCSFALLLLVSFLKDRHFCSA. Positions 225–238 are cleaved as a propeptide — removed in mature form; it reads LEGCNNNHGTWLVQ.

The protein localises to the vacuole. Its function is as follows. May be a subunit of a vacuolar malate and citrate transporter. In Hevea brasiliensis (Para rubber tree), this protein is Citrate-binding protein (CBP).